Here is a 79-residue protein sequence, read N- to C-terminus: Large ribosomal subunit protein uL24 (79 aa).

The protein belongs to the universal ribosomal protein uL24 family. Part of the 50S ribosomal subunit.

Functionally, one of two assembly initiator proteins, it binds directly to the 5'-end of the 23S rRNA, where it nucleates assembly of the 50S subunit. In terms of biological role, one of the proteins that surrounds the polypeptide exit tunnel on the outside of the subunit. In Lactobacillus delbrueckii subsp. bulgaricus (strain ATCC 11842 / DSM 20081 / BCRC 10696 / JCM 1002 / NBRC 13953 / NCIMB 11778 / NCTC 12712 / WDCM 00102 / Lb 14), this protein is Large ribosomal subunit protein uL24.